A 123-amino-acid polypeptide reads, in one-letter code: UPF0231 protein PMI2039 (123 aa).

It belongs to the UPF0231 family.

The polypeptide is UPF0231 protein PMI2039 (Proteus mirabilis (strain HI4320)).